The sequence spans 81 residues: Sulfur carrier protein TusA (81 aa).

C19 functions as the Cysteine persulfide intermediate in the catalytic mechanism.

The protein belongs to the sulfur carrier protein TusA family. In terms of assembly, interacts with IscS.

Its subcellular location is the cytoplasm. Its pathway is tRNA modification. In terms of biological role, sulfur carrier protein involved in sulfur trafficking in the cell. Part of a sulfur-relay system required for 2-thiolation during synthesis of 2-thiouridine of the modified wobble base 5-methylaminomethyl-2-thiouridine (mnm(5)s(2)U) in tRNA. Interacts with IscS and stimulates its cysteine desulfurase activity. Accepts an activated sulfur from IscS, which is then transferred to TusD, and thus determines the direction of sulfur flow from IscS to 2-thiouridine formation. Also appears to be involved in sulfur transfer for the biosynthesis of molybdopterin. This is Sulfur carrier protein TusA from Shigella boydii serotype 18 (strain CDC 3083-94 / BS512).